We begin with the raw amino-acid sequence, 229 residues long: MSNSLDRLERKLGYTFKDRDLMVLALTHRSYAGRNNERLEFLGDAILNFVIGEALFHHFPQAREGQLSRLRARLVKGETLALLARGFEVGDYLRLGSGELKSGGFRRESILADAMEALIGAIYLDTGMDSARERIIAWLGPQLRELTPVDTNKDPKTRLQEFLQSRGCDLPRYEVVDIQGEPHCRTFFVDCEVALLSDKTHGHGGSRRIAEQVAAAAALVALGVENGHD.

Positions 5 to 127 (LDRLERKLGY…LIGAIYLDTG (123 aa)) constitute an RNase III domain. Residue Glu-40 coordinates Mg(2+). Asp-44 is an active-site residue. Asp-113 and Glu-116 together coordinate Mg(2+). Residue Glu-116 is part of the active site. The DRBM domain maps to 154-224 (DPKTRLQEFL…AAAALVALGV (71 aa)).

This sequence belongs to the ribonuclease III family. As to quaternary structure, homodimer. Requires Mg(2+) as cofactor.

Its subcellular location is the cytoplasm. The catalysed reaction is Endonucleolytic cleavage to 5'-phosphomonoester.. Its function is as follows. Digests double-stranded RNA. Involved in the processing of primary rRNA transcript to yield the immediate precursors to the large and small rRNAs (23S and 16S). Processes some mRNAs, and tRNAs when they are encoded in the rRNA operon. Processes pre-crRNA and tracrRNA of type II CRISPR loci if present in the organism. The chain is Ribonuclease 3 from Pseudomonas aeruginosa (strain LESB58).